Consider the following 434-residue polypeptide: [Pyruvate dehydrogenase (acetyl-transferring)] kinase isozyme 1, mitochondrial (434 aa).

The transit peptide at 1-26 directs the protein to the mitochondrion; that stretch reads MRLARLLRGGTSVRPLCAVPCASRSL. At Y136 the chain carries Phosphotyrosine; by FGFR1. One can recognise a Histidine kinase domain in the interval 161 to 391; the sequence is TEYKESFGVD…DAVIYIKALS (231 aa). Residue Y241 is modified to Phosphotyrosine; by FGFR1, ABL1, FLT3 and JAK2. At Y242 the chain carries Phosphotyrosine; by FGFR1. ATP contacts are provided by residues 277–284, D316, 335–336, and 352–357; these read ELFKNAMR, ST, and GFGYGL. T336 carries the post-translational modification Phosphothreonine. K403 is subject to N6-succinyllysine.

The protein belongs to the PDK/BCKDK protein kinase family. As to quaternary structure, homodimer, and heterodimer with PDK2. Interacts with the pyruvate dehydrogenase complex subunit DLAT, and is part of the multimeric pyruvate dehydrogenase complex that contains multiple copies of pyruvate dehydrogenase (E1), dihydrolipoamide acetyltransferase (DLAT, E2) and lipoamide dehydrogenase (DLD, E3). Interacts with phosphoglycerate kinase PGK1; the interaction is direct, occurs under hypoxic conditions and leads to PDK1-mediated inhibition of pyruvate dehydrogenase complex activity. In terms of processing, phosphorylated by constitutively activated ABL1, FGFR1, FLT3 and JAK2 (in vitro), and this may also occur in cancer cells that express constitutively activated ABL1, FGFR1, FLT3 and JAK2. Phosphorylation at Tyr-241 and Tyr-242 strongly increases kinase activity, while phosphorylation at Tyr-136 has a lesser effect. Phosphorylated under hypoxic conditions at Thr-336 by phosphoglycerate kinase PGK1 which has an activating effect.

The protein localises to the mitochondrion matrix. The enzyme catalyses L-seryl-[pyruvate dehydrogenase E1 alpha subunit] + ATP = O-phospho-L-seryl-[pyruvate dehydrogenase E1 alpha subunit] + ADP + H(+). In terms of biological role, kinase that plays a key role in regulation of glucose and fatty acid metabolism and homeostasis via phosphorylation of the pyruvate dehydrogenase subunits PDHA1 and PDHA2. This inhibits pyruvate dehydrogenase activity, and thereby regulates metabolite flux through the tricarboxylic acid cycle, down-regulates aerobic respiration and inhibits the formation of acetyl-coenzyme A from pyruvate. Plays an important role in cellular responses to hypoxia and is important for cell proliferation under hypoxia. This chain is [Pyruvate dehydrogenase (acetyl-transferring)] kinase isozyme 1, mitochondrial (Pdk1), found in Mus musculus (Mouse).